The primary structure comprises 323 residues: Serine/threonine-protein phosphatase PP1 (323 aa).

Mn(2+) contacts are provided by Asp63, His65, Asp91, and Asn123. His124 functions as the Proton donor in the catalytic mechanism. His172 and His247 together coordinate Mn(2+).

This sequence belongs to the PPP phosphatase family. PP-1 subfamily. Mn(2+) is required as a cofactor.

The catalysed reaction is O-phospho-L-seryl-[protein] + H2O = L-seryl-[protein] + phosphate. The enzyme catalyses O-phospho-L-threonyl-[protein] + H2O = L-threonyl-[protein] + phosphate. Its function is as follows. Plays an important role in the control of mitosis by reversing the action of the nimA kinase. This is Serine/threonine-protein phosphatase PP1 (bimG) from Emericella nidulans (strain FGSC A4 / ATCC 38163 / CBS 112.46 / NRRL 194 / M139) (Aspergillus nidulans).